Consider the following 133-residue polypeptide: Secreted effector protein SteB (133 aa).

It is found in the secreted. Its subcellular location is the host cytoplasm. In terms of biological role, effector proteins function to alter host cell physiology and promote bacterial survival in host tissues. This is Secreted effector protein SteB (steB) from Salmonella typhimurium (strain 14028s / SGSC 2262).